A 505-amino-acid chain; its full sequence is ATP synthase subunit beta, mitochondrial (505 aa).

184-191 (GGAGVGKT) serves as a coordination point for ATP.

The protein belongs to the ATPase alpha/beta chains family. In terms of assembly, F-type ATPases have 2 components, CF(1) - the catalytic core - and CF(0) - the membrane proton channel. CF(1) has five subunits: alpha(3), beta(3), gamma(1), delta(1), epsilon(1). CF(0) has three main subunits: a, b and c.

It localises to the mitochondrion. The protein resides in the mitochondrion inner membrane. It catalyses the reaction ATP + H2O + 4 H(+)(in) = ADP + phosphate + 5 H(+)(out). Mitochondrial membrane ATP synthase (F(1)F(0) ATP synthase or Complex V) produces ATP from ADP in the presence of a proton gradient across the membrane which is generated by electron transport complexes of the respiratory chain. F-type ATPases consist of two structural domains, F(1) - containing the extramembraneous catalytic core, and F(0) - containing the membrane proton channel, linked together by a central stalk and a peripheral stalk. During catalysis, ATP synthesis in the catalytic domain of F(1) is coupled via a rotary mechanism of the central stalk subunits to proton translocation. Subunits alpha and beta form the catalytic core in F(1). Rotation of the central stalk against the surrounding alpha(3)beta(3) subunits leads to hydrolysis of ATP in three separate catalytic sites on the beta subunits. This is ATP synthase subunit beta, mitochondrial (ATP2) from Kluyveromyces lactis (strain ATCC 8585 / CBS 2359 / DSM 70799 / NBRC 1267 / NRRL Y-1140 / WM37) (Yeast).